Here is a 611-residue protein sequence, read N- to C-terminus: ATP-dependent zinc metalloprotease FtsH 1 (611 aa).

The Cytoplasmic portion of the chain corresponds to 1-6; that stretch reads MNDNNK. The chain crosses the membrane as a helical span at residues 7-27; that stretch reads IIRSMVLYLLIFIAIYAMVQL. Over 28 to 107 the chain is Extracellular; sequence YSQSTEPITD…KSEPQVGPPW (80 aa). The helical transmembrane segment at 108–128 threads the bilayer; sequence WVQMLPSLFLIVIFIIFWYIF. 124-131 is a binding site for ATP; that stretch reads FWYIFMQQ. Residues 129 to 611 lie on the Cytoplasmic side of the membrane; the sequence is MQQAQGGGGS…GEDIEGVQFA (483 aa). His423 provides a ligand contact to Zn(2+). Glu424 is an active-site residue. The Zn(2+) site is built by His427 and Asp499.

The protein in the central section; belongs to the AAA ATPase family. This sequence in the C-terminal section; belongs to the peptidase M41 family. In terms of assembly, homohexamer. Zn(2+) serves as cofactor.

It is found in the cell membrane. Functionally, acts as a processive, ATP-dependent zinc metallopeptidase for both cytoplasmic and membrane proteins. Plays a role in the quality control of integral membrane proteins. The polypeptide is ATP-dependent zinc metalloprotease FtsH 1 (Thermoanaerobacter sp. (strain X514)).